Here is a 58-residue protein sequence, read N- to C-terminus: T-cell receptor gamma alternate reading frame protein (58 aa).

Detected at low levels in the ductal cells of the salivary gland but not in the acinar cells (at protein level). Expressed in endometrium (at protein level). Expressed in epithelial cells within the acinar ducts of the prostate.

The chain is T-cell receptor gamma alternate reading frame protein from Homo sapiens (Human).